The chain runs to 498 residues: ATP synthase subunit beta, chloroplastic (498 aa).

172–179 (GGAGVGKT) contacts ATP.

This sequence belongs to the ATPase alpha/beta chains family. As to quaternary structure, F-type ATPases have 2 components, CF(1) - the catalytic core - and CF(0) - the membrane proton channel. CF(1) has five subunits: alpha(3), beta(3), gamma(1), delta(1), epsilon(1). CF(0) has four main subunits: a(1), b(1), b'(1) and c(9-12).

The protein resides in the plastid. The protein localises to the chloroplast thylakoid membrane. The enzyme catalyses ATP + H2O + 4 H(+)(in) = ADP + phosphate + 5 H(+)(out). Its function is as follows. Produces ATP from ADP in the presence of a proton gradient across the membrane. The catalytic sites are hosted primarily by the beta subunits. In Lolium perenne (Perennial ryegrass), this protein is ATP synthase subunit beta, chloroplastic.